The sequence spans 87 residues: Small ribosomal subunit protein bS18 (87 aa).

The disordered stretch occupies residues 1 to 21; the sequence is MRHKPTPPKGNKSLGNALASK.

The protein belongs to the bacterial ribosomal protein bS18 family. Part of the 30S ribosomal subunit. Forms a tight heterodimer with protein bS6.

In terms of biological role, binds as a heterodimer with protein bS6 to the central domain of the 16S rRNA, where it helps stabilize the platform of the 30S subunit. This Chlorobium phaeobacteroides (strain DSM 266 / SMG 266 / 2430) protein is Small ribosomal subunit protein bS18.